Consider the following 181-residue polypeptide: MDPRTLSALKDAIRSIPDYPKPGIVFRDITTLLGDPGAFRRAVDALVHPFAGGRIDQVAGIEARGFILGGAVAHQLSSGFVPIRKKGKLPHTTVSIAYALEYGTDEMEIHSDAVKPGDRVVLVDDLIATGGTAKAAVDLLRQIGAEVVAACFVIDLPELGGAAKLRALDVPVWTLVEFEGH.

Belongs to the purine/pyrimidine phosphoribosyltransferase family. In terms of assembly, homodimer.

It localises to the cytoplasm. It catalyses the reaction AMP + diphosphate = 5-phospho-alpha-D-ribose 1-diphosphate + adenine. It participates in purine metabolism; AMP biosynthesis via salvage pathway; AMP from adenine: step 1/1. Functionally, catalyzes a salvage reaction resulting in the formation of AMP, that is energically less costly than de novo synthesis. The polypeptide is Adenine phosphoribosyltransferase (Methylobacterium nodulans (strain LMG 21967 / CNCM I-2342 / ORS 2060)).